Here is a 353-residue protein sequence, read N- to C-terminus: Photosystem II protein D1 (353 aa).

T2 carries the N-acetylthreonine modification. T2 is modified (phosphothreonine). A run of 3 helical transmembrane segments spans residues 29 to 46 (YIGW…TATS), 118 to 133 (HFLL…EWEL), and 142 to 156 (WIAV…AATA). Residue H118 participates in chlorophyll a binding. Y126 provides a ligand contact to pheophytin a. The [CaMn4O5] cluster site is built by D170 and E189. A helical membrane pass occupies residues 197–218 (FHMLGVAGVFGGSLFSAMHGSL). H198 is a chlorophyll a binding site. A quinone contacts are provided by residues H215 and 264–265 (SF). H215 serves as a coordination point for Fe cation. H272 contacts Fe cation. A helical transmembrane segment spans residues 274–288 (FLTAWPVVGIWFTAL). 4 residues coordinate [CaMn4O5] cluster: H332, E333, D342, and A344. Positions 345-353 (AVEAPSTNG) are excised as a propeptide.

The protein belongs to the reaction center PufL/M/PsbA/D family. In terms of assembly, PSII is composed of 1 copy each of membrane proteins PsbA, PsbB, PsbC, PsbD, PsbE, PsbF, PsbH, PsbI, PsbJ, PsbK, PsbL, PsbM, PsbT, PsbX, PsbY, PsbZ, Psb30/Ycf12, at least 3 peripheral proteins of the oxygen-evolving complex and a large number of cofactors. It forms dimeric complexes. The D1/D2 heterodimer binds P680, chlorophylls that are the primary electron donor of PSII, and subsequent electron acceptors. It shares a non-heme iron and each subunit binds pheophytin, quinone, additional chlorophylls, carotenoids and lipids. D1 provides most of the ligands for the Mn4-Ca-O5 cluster of the oxygen-evolving complex (OEC). There is also a Cl(-1) ion associated with D1 and D2, which is required for oxygen evolution. The PSII complex binds additional chlorophylls, carotenoids and specific lipids. is required as a cofactor. Post-translationally, tyr-161 forms a radical intermediate that is referred to as redox-active TyrZ, YZ or Y-Z. C-terminally processed by CTPA; processing is essential to allow assembly of the oxygen-evolving complex and thus photosynthetic growth.

The protein localises to the plastid. It is found in the chloroplast thylakoid membrane. It catalyses the reaction 2 a plastoquinone + 4 hnu + 2 H2O = 2 a plastoquinol + O2. Photosystem II (PSII) is a light-driven water:plastoquinone oxidoreductase that uses light energy to abstract electrons from H(2)O, generating O(2) and a proton gradient subsequently used for ATP formation. It consists of a core antenna complex that captures photons, and an electron transfer chain that converts photonic excitation into a charge separation. The D1/D2 (PsbA/PsbD) reaction center heterodimer binds P680, the primary electron donor of PSII as well as several subsequent electron acceptors. The sequence is that of Photosystem II protein D1 from Barbarea verna (Land cress).